Consider the following 102-residue polypeptide: uncharacterized protein (102 aa).

This is an uncharacterized protein from Methanocaldococcus jannaschii (strain ATCC 43067 / DSM 2661 / JAL-1 / JCM 10045 / NBRC 100440) (Methanococcus jannaschii).